Reading from the N-terminus, the 549-residue chain is Glucose-6-phosphate isomerase (549 aa).

Glu-355 functions as the Proton donor in the catalytic mechanism. Catalysis depends on residues His-387 and Lys-515.

The protein belongs to the GPI family.

The protein localises to the cytoplasm. The catalysed reaction is alpha-D-glucose 6-phosphate = beta-D-fructose 6-phosphate. Its pathway is carbohydrate biosynthesis; gluconeogenesis. It participates in carbohydrate degradation; glycolysis; D-glyceraldehyde 3-phosphate and glycerone phosphate from D-glucose: step 2/4. In terms of biological role, catalyzes the reversible isomerization of glucose-6-phosphate to fructose-6-phosphate. The chain is Glucose-6-phosphate isomerase from Histophilus somni (strain 2336) (Haemophilus somnus).